Consider the following 468-residue polypeptide: Argininosuccinate lyase (468 aa).

It belongs to the lyase 1 family. Argininosuccinate lyase subfamily.

The protein localises to the cytoplasm. The catalysed reaction is 2-(N(omega)-L-arginino)succinate = fumarate + L-arginine. The protein operates within amino-acid biosynthesis; L-arginine biosynthesis; L-arginine from L-ornithine and carbamoyl phosphate: step 3/3. In Methanothermobacter thermautotrophicus (strain ATCC 29096 / DSM 1053 / JCM 10044 / NBRC 100330 / Delta H) (Methanobacterium thermoautotrophicum), this protein is Argininosuccinate lyase.